Here is a 296-residue protein sequence, read N- to C-terminus: Lipoyl synthase (296 aa).

Cys-35, Cys-40, Cys-46, Cys-61, Cys-65, Cys-68, and Ser-274 together coordinate [4Fe-4S] cluster. Positions 47–263 constitute a Radical SAM core domain; sequence WSSKHVTVMI…KEAAYARGFL (217 aa).

Belongs to the radical SAM superfamily. Lipoyl synthase family. [4Fe-4S] cluster is required as a cofactor.

Its subcellular location is the cytoplasm. It carries out the reaction [[Fe-S] cluster scaffold protein carrying a second [4Fe-4S](2+) cluster] + N(6)-octanoyl-L-lysyl-[protein] + 2 oxidized [2Fe-2S]-[ferredoxin] + 2 S-adenosyl-L-methionine + 4 H(+) = [[Fe-S] cluster scaffold protein] + N(6)-[(R)-dihydrolipoyl]-L-lysyl-[protein] + 4 Fe(3+) + 2 hydrogen sulfide + 2 5'-deoxyadenosine + 2 L-methionine + 2 reduced [2Fe-2S]-[ferredoxin]. It participates in protein modification; protein lipoylation via endogenous pathway; protein N(6)-(lipoyl)lysine from octanoyl-[acyl-carrier-protein]: step 2/2. Functionally, catalyzes the radical-mediated insertion of two sulfur atoms into the C-6 and C-8 positions of the octanoyl moiety bound to the lipoyl domains of lipoate-dependent enzymes, thereby converting the octanoylated domains into lipoylated derivatives. The sequence is that of Lipoyl synthase from Neorickettsia sennetsu (strain ATCC VR-367 / Miyayama) (Ehrlichia sennetsu).